A 1110-amino-acid chain; its full sequence is ATP-dependent DNA helicase MPH1 (1110 aa).

The segment covering 24 to 34 (LNEVSDSQTGR) has biased composition (polar residues). Disordered regions lie at residues 24–165 (LNEV…TNGK), 178–212 (FEEE…PVTN), and 236–305 (TETA…PTHH). 2 stretches are compositionally biased toward basic and acidic residues: residues 42–57 (NSHE…REIE) and 178–188 (FEEEQSARGDA). The span at 189–199 (EMLDDSIEEPG) shows a compositional bias: acidic residues. 2 stretches are compositionally biased toward polar residues: residues 246–273 (ISSQ…QTTL) and 287–300 (QPAT…SRNE). Residues 331–499 (IAHRALFHNL…EVIDGLSISR (169 aa)) enclose the Helicase ATP-binding domain. 344-351 (LPTGLGKT) is an ATP binding site. A DEAH box motif is present at residues 447-450 (DEAH). The region spanning 675 to 846 (ILNHFLDAGG…RFTFHTDKSS (172 aa)) is the Helicase C-terminal domain. Disordered stretches follow at residues 867–937 (ENSQ…PDLG), 1013–1055 (VGDP…RCGT), and 1069–1110 (NLAW…DVFE). Positions 879 to 890 (RSRAPKRPPKKF) are enriched in basic residues. Basic and acidic residues-rich tracts occupy residues 891–900 (HMPDGVEKGF), 1041–1055 (QSRE…RCGT), and 1077–1093 (EAPR…DQKP).

Belongs to the DEAD box helicase family. DEAH subfamily. FANCM sub-subfamily. In terms of assembly, interacts with the MHF histone-fold complex to form the FANCM-MHF complex.

Its subcellular location is the nucleus. The enzyme catalyses ATP + H2O = ADP + phosphate + H(+). Functionally, ATP-dependent DNA helicase involved in DNA damage repair by homologous recombination and in genome maintenance. Capable of unwinding D-loops. Plays a role in limiting crossover recombinants during mitotic DNA double-strand break (DSB) repair. Component of a FANCM-MHF complex which promotes gene conversion at blocked replication forks, probably by reversal of the stalled fork. This Coccidioides immitis (strain RS) (Valley fever fungus) protein is ATP-dependent DNA helicase MPH1.